A 99-amino-acid chain; its full sequence is Small ribosomal subunit protein cS23 (99 aa).

This sequence belongs to the chloroplast-specific ribosomal protein cS23 family. Part of the 30S ribosomal subunit.

It is found in the plastid. Its subcellular location is the chloroplast. Probably a ribosomal protein or a ribosome-associated protein. The chain is Small ribosomal subunit protein cS23 from Gracilaria tenuistipitata var. liui (Red alga).